We begin with the raw amino-acid sequence, 1002 residues long: Leucine-rich repeat receptor-like serine/threonine-protein kinase BAM2 (1002 aa).

An N-terminal signal peptide occupies residues 1–22 (MKLLLLLLLLLLLHISHSFTVA). Topologically, residues 23 to 636 (KPITELHALL…SHVKPLSATT (614 aa)) are extracellular. N-linked (GlcNAc...) asparagine glycans are attached at residues N51, N80, N97, N123, N130, N153, and N164. 22 LRR repeats span residues 68 to 92 (LRHVTSLDLSGLNLSGTLSSDVAHL), 93 to 116 (PLLQNLSLAANQISGPIPPQISNL), 118 to 140 (ELRHLNLSNNVFNGSFPDELSSG), 141 to 165 (LVNLRVLDLYNNNLTGDLPVSLTNL), 167 to 188 (QLRHLHLGGNYFSGKIPATYGT), 189 to 213 (WPVLEYLAVSGNELTGKIPPEIGNL), 215 to 238 (TLRELYIGYYNAFENGLPPEIGNL), 239 to 262 (SELVRFDAANCGLTGEIPPEIGKL), 263 to 285 (QKLDTLFLQVNAFTGTITQELGL), 286 to 309 (ISSLKSMDLSNNMFTGEIPTSFSQ), 311 to 334 (KNLTLLNLFRNKLYGAIPEFIGEM), 335 to 358 (PELEVLQLWENNFTGSIPQKLGEN), 359 to 382 (GRLVILDLSSNKLTGTLPPNMCSG), 384 to 406 (RLMTLITLGNFLFGSIPDSLGKC), 407 to 430 (ESLTRIRMGENFLNGSIPKELFGL), 431 to 456 (PKLSQVELQDNYLTGELPISGGGVSG), 458 to 479 (LGQISLSNNQLSGSLPAAIGNL), 480 to 503 (SGVQKLLLDGNKFSGSIPPEIGRL), 505 to 527 (QLSKLDFSHNLFSGRIAPEISRC), 528 to 551 (KLLTFVDLSRNELSGDIPNELTGM), 552 to 575 (KILNYLNLSRNHLVGSIPVTIASM), and 577 to 600 (SLTSVDFSYNNLSGLVPSTGQFSY). N-linked (GlcNAc...) asparagine glycosylation is found at N212 and N237. Residues N312 and N346 are each glycosylated (N-linked (GlcNAc...) asparagine). N-linked (GlcNAc...) asparagine glycosylation is present at N420. An N-linked (GlcNAc...) asparagine glycan is attached at N478. N-linked (GlcNAc...) asparagine glycosylation is found at N558, N587, and N602. A helical membrane pass occupies residues 637–657 (KLLLVLGLLFCSMVFAIVAII). At 658–1002 (KARSLRNASE…SGSPPDLLSN (345 aa)) the chain is on the cytoplasmic side. T682 is subject to Phosphothreonine. The Protein kinase domain maps to 690–967 (LKEDNIIGKG…VQILTEIPKI (278 aa)). ATP is bound by residues 696 to 704 (IGKGGAGIV) and K718. Y765 and Y803 each carry phosphotyrosine. The active-site Proton acceptor is the D816. A Phosphoserine modification is found at S851. 2 positions are modified to phosphotyrosine: Y859 and Y866. At T867 the chain carries Phosphothreonine. The disordered stretch occupies residues 969-1002 (LSKQQAAESDVTEKAPAINESSPDSGSPPDLLSN). Low complexity predominate over residues 989–1002 (SSPDSGSPPDLLSN).

This sequence belongs to the protein kinase superfamily. Ser/Thr protein kinase family. In terms of assembly, interacts with BAM1 and CLV1. Binds to the CLV3, CLE11, CLE18, CLE19, CLE22, CLE25, CLE26, CLE40, CLE41 and CLE42 mature peptides, probably via its extracellular leucine-rich repeat region. In terms of tissue distribution, expressed in seedlings, roots, rosette leaves, stems, inflorescences, flowers and siliques.

It localises to the cell membrane. It carries out the reaction L-seryl-[protein] + ATP = O-phospho-L-seryl-[protein] + ADP + H(+). It catalyses the reaction L-threonyl-[protein] + ATP = O-phospho-L-threonyl-[protein] + ADP + H(+). Functionally, necessary for male gametophyte development, as well as ovule specification and function. Involved in cell-cell communication process required during early anther development, and regulating cell division and differentiation to organize cell layers. Required for the development of high-ordered vascular strands within the leaf and a correlated control of leaf shape, size and symmetry. May regulate the CLV1-dependent CLV3-mediated signaling in meristems maintenance. In Arabidopsis thaliana (Mouse-ear cress), this protein is Leucine-rich repeat receptor-like serine/threonine-protein kinase BAM2 (BAM2).